We begin with the raw amino-acid sequence, 134 residues long: MKVVKLADIIGTNRDVDGGNWRSQRIVVESDGMGYSLHDTQIKAGTETHLWYKYHLESVYVIEGEGEVETVKDGKVWPVKQYECYVLDKNDEHLLRAKTDMRMVCVFNPPVTGEEVHDEDGAYPLPEHMKPLNS.

This sequence belongs to the ectoine synthase family.

The enzyme catalyses (2S)-4-acetamido-2-aminobutanoate = L-ectoine + H2O. Its pathway is amine and polyamine biosynthesis; ectoine biosynthesis; L-ectoine from L-aspartate 4-semialdehyde: step 3/3. Functionally, catalyzes the circularization of gamma-N-acetyl-alpha,gamma-diaminobutyric acid (ADABA) to ectoine (1,4,5,6-tetrahydro-2-methyl-4-pyrimidine carboxylic acid), which is an excellent osmoprotectant. The protein is L-ectoine synthase of Shouchella clausii (strain KSM-K16) (Alkalihalobacillus clausii).